Reading from the N-terminus, the 313-residue chain is Porphobilinogen deaminase (313 aa).

The residue at position 242 (Cys242) is an S-(dipyrrolylmethanemethyl)cysteine.

It belongs to the HMBS family. In terms of assembly, monomer. The cofactor is dipyrromethane.

The catalysed reaction is 4 porphobilinogen + H2O = hydroxymethylbilane + 4 NH4(+). Its pathway is porphyrin-containing compound metabolism; protoporphyrin-IX biosynthesis; coproporphyrinogen-III from 5-aminolevulinate: step 2/4. Functionally, tetrapolymerization of the monopyrrole PBG into the hydroxymethylbilane pre-uroporphyrinogen in several discrete steps. This Escherichia coli O45:K1 (strain S88 / ExPEC) protein is Porphobilinogen deaminase.